A 240-amino-acid chain; its full sequence is 1-(5-phosphoribosyl)-5-[(5-phosphoribosylamino)methylideneamino] imidazole-4-carboxamide isomerase (240 aa).

Residue aspartate 10 is the Proton acceptor of the active site. Aspartate 132 serves as the catalytic Proton donor.

It belongs to the HisA/HisF family.

Its subcellular location is the cytoplasm. The catalysed reaction is 1-(5-phospho-beta-D-ribosyl)-5-[(5-phospho-beta-D-ribosylamino)methylideneamino]imidazole-4-carboxamide = 5-[(5-phospho-1-deoxy-D-ribulos-1-ylimino)methylamino]-1-(5-phospho-beta-D-ribosyl)imidazole-4-carboxamide. Its pathway is amino-acid biosynthesis; L-histidine biosynthesis; L-histidine from 5-phospho-alpha-D-ribose 1-diphosphate: step 4/9. The chain is 1-(5-phosphoribosyl)-5-[(5-phosphoribosylamino)methylideneamino] imidazole-4-carboxamide isomerase from Methanocella arvoryzae (strain DSM 22066 / NBRC 105507 / MRE50).